We begin with the raw amino-acid sequence, 134 residues long: Profilin-2 (134 aa).

Residues Cys13 and Cys118 are joined by a disulfide bond. Residues 84 to 100 (AVIRGKKGSGGITIKKT) carry the Involved in PIP2 interaction motif. Phosphothreonine is present on Thr114.

The protein belongs to the profilin family. As to quaternary structure, occurs in many kinds of cells as a complex with monomeric actin in a 1:1 ratio. Post-translationally, phosphorylated by MAP kinases.

It is found in the cytoplasm. It localises to the cytoskeleton. Functionally, binds to actin and affects the structure of the cytoskeleton. At high concentrations, profilin prevents the polymerization of actin, whereas it enhances it at low concentrations. This is Profilin-2 from Olea europaea (Common olive).